Reading from the N-terminus, the 629-residue chain is Phosphomethylpyrimidine synthase (629 aa).

Residues 1–24 (MSTKPKNAAHLSESAQVDSGSVQP) are disordered. A compositionally biased stretch (polar residues) spans 13–24 (ESAQVDSGSVQP). Substrate is bound by residues asparagine 233, methionine 262, tyrosine 291, histidine 327, 347 to 349 (SRG), 388 to 391 (DGLR), and glutamate 427. Histidine 431 is a binding site for Zn(2+). Residue tyrosine 454 participates in substrate binding. Position 495 (histidine 495) interacts with Zn(2+). 3 residues coordinate [4Fe-4S] cluster: cysteine 575, cysteine 578, and cysteine 583.

Belongs to the ThiC family. Homodimer. The cofactor is [4Fe-4S] cluster.

It catalyses the reaction 5-amino-1-(5-phospho-beta-D-ribosyl)imidazole + S-adenosyl-L-methionine = 4-amino-2-methyl-5-(phosphooxymethyl)pyrimidine + CO + 5'-deoxyadenosine + formate + L-methionine + 3 H(+). Its pathway is cofactor biosynthesis; thiamine diphosphate biosynthesis. Its function is as follows. Catalyzes the synthesis of the hydroxymethylpyrimidine phosphate (HMP-P) moiety of thiamine from aminoimidazole ribotide (AIR) in a radical S-adenosyl-L-methionine (SAM)-dependent reaction. This Pseudomonas syringae pv. tomato (strain ATCC BAA-871 / DC3000) protein is Phosphomethylpyrimidine synthase.